Reading from the N-terminus, the 242-residue chain is Biosynthetic peptidoglycan transglycosylase (242 aa).

The chain crosses the membrane as a helical span at residues 12 to 31 (LLFWLMLASALLVLALRWLP).

It belongs to the glycosyltransferase 51 family.

It localises to the cell inner membrane. The enzyme catalyses [GlcNAc-(1-&gt;4)-Mur2Ac(oyl-L-Ala-gamma-D-Glu-L-Lys-D-Ala-D-Ala)](n)-di-trans,octa-cis-undecaprenyl diphosphate + beta-D-GlcNAc-(1-&gt;4)-Mur2Ac(oyl-L-Ala-gamma-D-Glu-L-Lys-D-Ala-D-Ala)-di-trans,octa-cis-undecaprenyl diphosphate = [GlcNAc-(1-&gt;4)-Mur2Ac(oyl-L-Ala-gamma-D-Glu-L-Lys-D-Ala-D-Ala)](n+1)-di-trans,octa-cis-undecaprenyl diphosphate + di-trans,octa-cis-undecaprenyl diphosphate + H(+). It participates in cell wall biogenesis; peptidoglycan biosynthesis. In terms of biological role, peptidoglycan polymerase that catalyzes glycan chain elongation from lipid-linked precursors. In Ectopseudomonas mendocina (strain ymp) (Pseudomonas mendocina), this protein is Biosynthetic peptidoglycan transglycosylase.